The following is a 301-amino-acid chain: Acetyl-coenzyme A carboxylase carboxyl transferase subunit beta (301 aa).

In terms of domain architecture, CoA carboxyltransferase N-terminal spans V23 to V292. Residues C27, C30, C46, and C49 each contribute to the Zn(2+) site. The C4-type zinc finger occupies C27–C49. The disordered stretch occupies residues L280–A301.

This sequence belongs to the AccD/PCCB family. As to quaternary structure, acetyl-CoA carboxylase is a heterohexamer composed of biotin carboxyl carrier protein (AccB), biotin carboxylase (AccC) and two subunits each of ACCase subunit alpha (AccA) and ACCase subunit beta (AccD). It depends on Zn(2+) as a cofactor.

Its subcellular location is the cytoplasm. It carries out the reaction N(6)-carboxybiotinyl-L-lysyl-[protein] + acetyl-CoA = N(6)-biotinyl-L-lysyl-[protein] + malonyl-CoA. The protein operates within lipid metabolism; malonyl-CoA biosynthesis; malonyl-CoA from acetyl-CoA: step 1/1. Component of the acetyl coenzyme A carboxylase (ACC) complex. Biotin carboxylase (BC) catalyzes the carboxylation of biotin on its carrier protein (BCCP) and then the CO(2) group is transferred by the transcarboxylase to acetyl-CoA to form malonyl-CoA. The sequence is that of Acetyl-coenzyme A carboxylase carboxyl transferase subunit beta from Enterobacter sp. (strain 638).